We begin with the raw amino-acid sequence, 156 residues long: Probable cyclic pyranopterin monophosphate synthase (156 aa).

Substrate-binding positions include 74–76 (LCH) and 110–111 (ME). The active site involves aspartate 125.

It belongs to the MoaC family. As to quaternary structure, homohexamer; trimer of dimers.

It carries out the reaction (8S)-3',8-cyclo-7,8-dihydroguanosine 5'-triphosphate = cyclic pyranopterin phosphate + diphosphate. It functions in the pathway cofactor biosynthesis; molybdopterin biosynthesis. In terms of biological role, catalyzes the conversion of (8S)-3',8-cyclo-7,8-dihydroguanosine 5'-triphosphate to cyclic pyranopterin monophosphate (cPMP). This chain is Probable cyclic pyranopterin monophosphate synthase, found in Thermococcus kodakarensis (strain ATCC BAA-918 / JCM 12380 / KOD1) (Pyrococcus kodakaraensis (strain KOD1)).